A 415-amino-acid polypeptide reads, in one-letter code: MRLFYRLLKQPVPKQIERYSRFSPSPLSIKQFLDFGRDNACEKTSYMFLRKELPVRLANTMREVNLLPDNLLNRPSVGLVQSWYMQSFLELLEYENKSPEDPRVLDNFLNVLINIRNRHNDVVPTMAQGVIEYKEKFGFDPFISSNIQYFLDRFYTNRISFRMLINQHTLLFGGDTNPAHPKHIGSIDPTCNVADVVKDAYETAKMLCEQYYLVAPELEVEEFNAKAPNKPIQVVYVPSHLFHMLFELFKNSMRATVELHEDKKEGYPAVKTLVTLGKEDLSIKISDLGGGVPLRKIDRLFNYMYSTAPRPSLEPTRAAPLAGFGYGLPISRLYARYFQGDLKLYSMEGVGTDAVIYLKALSSESFERLPVFNKSAWRHYKTTPEADDWSNPSSEPRDASKYKAKQDKIKSNRTF.

Positions 131–362 constitute a Histidine kinase domain; sequence IEYKEKFGFD…DAVIYLKALS (232 aa). Residue 247–254 participates in ATP binding; it reads ELFKNSMR. Lys278 is modified (N6-succinyllysine). ATP-binding positions include Asp287, 306 to 307, and 323 to 328; these read ST and GFGYGL. Residues 383 to 415 form a disordered region; it reads TPEADDWSNPSSEPRDASKYKAKQDKIKSNRTF. The span at 395 to 415 shows a compositional bias: basic and acidic residues; that stretch reads EPRDASKYKAKQDKIKSNRTF.

It belongs to the PDK/BCKDK protein kinase family. As to quaternary structure, homodimer. Interacts with the pyruvate dehydrogenase complex subunit DLAT, and is part of the multimeric pyruvate dehydrogenase complex that contains multiple copies of pyruvate dehydrogenase (E1), dihydrolipoamide acetyltransferase (DLAT, E2) and lipoamide dehydrogenase (DLD, E3).

The protein localises to the mitochondrion matrix. The enzyme catalyses L-seryl-[pyruvate dehydrogenase E1 alpha subunit] + ATP = O-phospho-L-seryl-[pyruvate dehydrogenase E1 alpha subunit] + ADP + H(+). Its function is as follows. Inhibits pyruvate dehydrogenase activity by phosphorylation of the E1 subunit PDHA1, and thereby regulates glucose metabolism and aerobic respiration. Can also phosphorylate PDHA2. Decreases glucose utilization and increases fat metabolism in response to prolonged fasting, and as adaptation to a high-fat diet. Plays a role in glucose homeostasis and in maintaining normal blood glucose levels in function of nutrient levels and under starvation. Plays a role in the generation of reactive oxygen species. The sequence is that of [Pyruvate dehydrogenase (acetyl-transferring)] kinase isozyme 3, mitochondrial (Pdk3) from Mus musculus (Mouse).